The sequence spans 417 residues: UDP-N-acetylglucosamine 1-carboxyvinyltransferase (417 aa).

22–23 serves as a coordination point for phosphoenolpyruvate; sequence KN. Arg-91 is a binding site for UDP-N-acetyl-alpha-D-glucosamine. The active-site Proton donor is the Cys-115. 2-(S-cysteinyl)pyruvic acid O-phosphothioketal is present on Cys-115. Residues 120 to 124, Asp-304, and Ile-326 each bind UDP-N-acetyl-alpha-D-glucosamine; that span reads RPVDQ.

The protein belongs to the EPSP synthase family. MurA subfamily.

It is found in the cytoplasm. The enzyme catalyses phosphoenolpyruvate + UDP-N-acetyl-alpha-D-glucosamine = UDP-N-acetyl-3-O-(1-carboxyvinyl)-alpha-D-glucosamine + phosphate. The protein operates within cell wall biogenesis; peptidoglycan biosynthesis. Functionally, cell wall formation. Adds enolpyruvyl to UDP-N-acetylglucosamine. The chain is UDP-N-acetylglucosamine 1-carboxyvinyltransferase from Desulfovibrio desulfuricans (strain ATCC 27774 / DSM 6949 / MB).